Reading from the N-terminus, the 473-residue chain is Photosystem II CP43 reaction center protein (473 aa).

A propeptide spanning residues 1–14 (MKTLYSLRRFSHVE) is cleaved from the precursor. Thr-15 is modified (N-acetylthreonine). At Thr-15 the chain carries Phosphothreonine. Helical transmembrane passes span 69-93 (LFEV…PHLA), 134-155 (LLGP…KDRN), 178-200 (KALY…RKIT), 255-275 (KPFA…LSYS), and 291-312 (WFNN…ASQA). A [CaMn4O5] cluster-binding site is contributed by Glu-367. The helical transmembrane segment at 447–471 (RARAAAAGFEKGIDRDFEPVLSMTP) threads the bilayer.

Belongs to the PsbB/PsbC family. PsbC subfamily. PSII is composed of 1 copy each of membrane proteins PsbA, PsbB, PsbC, PsbD, PsbE, PsbF, PsbH, PsbI, PsbJ, PsbK, PsbL, PsbM, PsbT, PsbX, PsbY, PsbZ, Psb30/Ycf12, at least 3 peripheral proteins of the oxygen-evolving complex and a large number of cofactors. It forms dimeric complexes. The cofactor is Binds multiple chlorophylls and provides some of the ligands for the Ca-4Mn-5O cluster of the oxygen-evolving complex. It may also provide a ligand for a Cl- that is required for oxygen evolution. PSII binds additional chlorophylls, carotenoids and specific lipids..

The protein localises to the plastid membrane. Its function is as follows. One of the components of the core complex of photosystem II (PSII). It binds chlorophyll and helps catalyze the primary light-induced photochemical processes of PSII. PSII is a light-driven water:plastoquinone oxidoreductase, using light energy to abstract electrons from H(2)O, generating O(2) and a proton gradient subsequently used for ATP formation. This chain is Photosystem II CP43 reaction center protein, found in Cuscuta gronovii (Common dodder).